Reading from the N-terminus, the 240-residue chain is MQCFSFIKTIMILFNLLIFLCGAALLAVGIWVSIDGASFLKIFGPLSSSAMQFVNVGYFLIAAGAVVFALGFLGCYGAQTESKCALMTFFFILLLIFIAEVAAAVVALVYTTMAEHFLTLLVVPAIKKDYGSQKDFTQVWNTTMTELKCCGFTNYTDFEDSPYVRENNAFPPFCCNNVTNTVNETCTKEKADNQKVEGCFQQLLYDIRTNAVTVGGVAAGIGGLELAAMIVSMYLYCNLQ.

Topologically, residues 1 to 9 (MQCFSFIKT) are cytoplasmic. A helical transmembrane segment spans residues 10–30 (IMILFNLLIFLCGAALLAVGI). Topologically, residues 31-52 (WVSIDGASFLKIFGPLSSSAMQ) are extracellular. A helical transmembrane segment spans residues 53-73 (FVNVGYFLIAAGAVVFALGFL). Residues 74-88 (GCYGAQTESKCALMT) are Cytoplasmic-facing. Residues 89-109 (FFFILLLIFIAEVAAAVVALV) traverse the membrane as a helical segment. At 110–210 (YTTMAEHFLT…QQLLYDIRTN (101 aa)) the chain is on the extracellular side. The N-linked (GlcNAc...) asparagine glycan is linked to N154. Residues 211–231 (AVTVGGVAAGIGGLELAAMIV) form a helical membrane-spanning segment. The Cytoplasmic portion of the chain corresponds to 232 to 240 (SMYLYCNLQ).

Belongs to the tetraspanin (TM4SF) family. As to quaternary structure, interacts with SLC19A2. Interacts with NTRK1/TRKA.

It localises to the lysosome membrane. Its function is as follows. Structural component of specialized membrane microdomains known as tetraspanin-enriched microdomains (TERMs), which act as platforms for receptor clustering and signaling. Participates thereby in diverse biological functions such as cell signal transduction, adhesion, migration and protein trafficking. Regulates neuronal differentiation in response to NGF by facilitating NGF-mediated activation of NTRK1/TRKA receptor tyrosine kinase and subsequent downstream signaling pathways. Plays a role in the inhibition of TNFalpha-induced apoptosis. Mechanistically, inhibits the NF-kappa-B signaling pathway by blocking phosphorylation of CHUK. Also promotes the stability of the thiamine transporter 1/SLC19A2 in intestinal epithelial cells leading to an increase of thiamine uptake process. The chain is Tetraspanin-1 (TSPAN1) from Macaca fascicularis (Crab-eating macaque).